The primary structure comprises 118 residues: Large ribosomal subunit protein uL18 (118 aa).

The protein belongs to the universal ribosomal protein uL18 family. Part of the 50S ribosomal subunit; part of the 5S rRNA/L5/L18/L25 subcomplex. Contacts the 5S and 23S rRNAs.

Functionally, this is one of the proteins that bind and probably mediate the attachment of the 5S RNA into the large ribosomal subunit, where it forms part of the central protuberance. The sequence is that of Large ribosomal subunit protein uL18 from Nitrosospira multiformis (strain ATCC 25196 / NCIMB 11849 / C 71).